Here is a 98-residue protein sequence, read N- to C-terminus: Defensin-like protein 192 (98 aa).

The N-terminal stretch at 1–27 (MATKSVSTFAIFFILVLAIFETPEIEA) is a signal peptide. 4 disulfides stabilise this stretch: Cys-32–Cys-86, Cys-45–Cys-69, Cys-54–Cys-81, and Cys-58–Cys-83.

It belongs to the DEFL family. Protease inhibitor I18 (RTI/MTI-2) subfamily.

The protein localises to the secreted. This is Defensin-like protein 192 (ATTI7) from Arabidopsis thaliana (Mouse-ear cress).